The sequence spans 165 residues: Protein SprT (165 aa).

Residues 10–158 (EACYRQAEHF…CRRCKATLVF (149 aa)) form the SprT-like domain. His-69 is a binding site for Zn(2+). The active site involves Glu-70. Position 73 (His-73) interacts with Zn(2+).

Belongs to the SprT family. Requires Zn(2+) as cofactor.

It is found in the cytoplasm. This chain is Protein SprT, found in Pseudomonas aeruginosa (strain UCBPP-PA14).